We begin with the raw amino-acid sequence, 617 residues long: RNA polymerase sigma factor RpoD (617 aa).

The interval 170-220 is disordered; sequence PDDGSLPAEEVEPVNLKDDSADSKEKDDEEEESDDSSDSDDEGDGGPDPEE. Residues 184–195 are compositionally biased toward basic and acidic residues; the sequence is NLKDDSADSKEK. Residues 196-218 are compositionally biased toward acidic residues; sequence DDEEEESDDSSDSDDEGDGGPDP. Positions 383-453 are sigma-70 factor domain-2; that stretch reads MVEANLRLVI…TRSIADQART (71 aa). The Interaction with polymerase core subunit RpoC signature appears at 407 to 410; the sequence is DLIQ. The interval 462 to 538 is sigma-70 factor domain-3; sequence ETINKLNRIS…DSTMQSPIEM (77 aa). The interval 551–604 is sigma-70 factor domain-4; the sequence is VLAGLTAREAKVLRMRFGIDMNTDHTLEEVGKQFDVTRERIRQIEAKALRKLRH. A DNA-binding region (H-T-H motif) is located at residues 577–596; sequence LEEVGKQFDVTRERIRQIEA.

This sequence belongs to the sigma-70 factor family. RpoD/SigA subfamily. As to quaternary structure, interacts transiently with the RNA polymerase catalytic core.

Its subcellular location is the cytoplasm. Sigma factors are initiation factors that promote the attachment of RNA polymerase to specific initiation sites and are then released. This sigma factor is the primary sigma factor during exponential growth. The protein is RNA polymerase sigma factor RpoD of Pseudomonas aeruginosa (strain ATCC 15692 / DSM 22644 / CIP 104116 / JCM 14847 / LMG 12228 / 1C / PRS 101 / PAO1).